Reading from the N-terminus, the 465-residue chain is Lysophospholipid acyltransferase 2 (465 aa).

The next 9 membrane-spanning stretches (helical) occupy residues 15 to 35, 55 to 75, 86 to 106, 161 to 181, 214 to 234, 266 to 286, 356 to 376, 399 to 419, and 434 to 454; these read VSVAVLRFLLCFVATIPISFL, FLSYLSFGFSSNLHFLVPMTI, LSGFITFFLGFAYLIGCHVFY, SLIEYFGYCLCCGSHFAGPVF, AVFQAAICMALYLYLVPQFPL, YFIWSISEASIIISGLGFSGW, AVWHGLYPGYIIFFVQSALMI, VLVLINFLYTVVVLNYSSVGF, and VYYIGTVIPIAVLLLSYLVPV. Residue His-359 is part of the active site.

It belongs to the membrane-bound acyltransferase family. In terms of assembly, interacts with GPAT9 and DGAT1. As to expression, expressed in rosette leaves, pollen grains, developing embryos and developing seeds.

The protein resides in the endoplasmic reticulum membrane. It catalyses the reaction a 1-acyl-sn-glycero-3-phosphocholine + an acyl-CoA = a 1,2-diacyl-sn-glycero-3-phosphocholine + CoA. It carries out the reaction 1-(9Z-octadecenoyl)-sn-glycero-3-phosphocholine + (9Z)-octadecenoyl-CoA = 1,2-di-(9Z-octadecenoyl)-sn-glycero-3-phosphocholine + CoA. The catalysed reaction is 1-(9Z-octadecenoyl)-sn-glycero-3-phosphocholine + (9Z,12Z)-octadecadienoyl-CoA = 1-(9Z)-octadecenoyl-2-(9Z,12Z)-octadecadienoyl-sn-glycero-3-phosphocholine + CoA. The enzyme catalyses (9Z,12Z,15Z)-octadecatrienoyl-CoA + 1-(9Z-octadecenoyl)-sn-glycero-3-phosphocholine = 1-(9Z-octadecaenoyl)-2-(9Z,12Z,15Z-octadecatrienoyl)-sn-glycero-3-phosphocholine + CoA. It catalyses the reaction a 1-acyl-sn-glycero-3-phosphoethanolamine + an acyl-CoA = a 1,2-diacyl-sn-glycero-3-phosphoethanolamine + CoA. It carries out the reaction a 1-acyl-sn-glycero-3-phospho-L-serine + an acyl-CoA = a 1,2-diacyl-sn-glycero-3-phospho-L-serine + CoA. Lysophospholipid acyltransferase with broad specificity. Mediates the conversion of lysophosphatidylethanolamine (1-acyl-sn-glycero-3-phosphoethanolamine or LPE) into phosphatidylethanolamine (1,2-diacyl-sn-glycero-3-phosphoethanolamine or PE) (LPEAT activity). Catalyzes the acylation of lysophosphatidylserine (1-acyl-2-hydroxy-sn-glycero-3-phospho-L-serine or LPS) into phosphatidylserine (1,2-diacyl-sn-glycero-3-phospho-L-serine or PS) (LPSAT activity). Can convert lysophosphatidylcholine (1-acyl-sn-glycero-3-phosphocholine or LPC) into phosphatidylcholine (1,2-diacyl-sn-glycero-3-phosphocholine or PC) (LPCAT activity). Exhibits preference for C18-unsaturated acyl-CoA when transferring an acyl group to lysophosphatidylcholine. Can also utilize lysophosphatidylglycerol (LPG) as substrate in vitro. Has neither activity towards lysophosphatidic acid (LPA) nor lysophosphatidylinositol (LPI). Lysophospholipid acyltransferases catalyze the reacylation step of the phospholipid remodeling pathway also known as the Lands cycle. The primary function of the Lands cycle is to provide a route for acyl remodeling to modify fatty acid (FA) composition of phospholipids derived from the Kennedy pathway. Is involved in PC acyl editing and phosphocholine headgroup exchange between PC and diacylglycerols. This processes control the majority of acyl fluxes through PC to provide polyunsaturated fatty acids for triacylglycerols synthesis in seeds. Involved with LPCAT1 in the direct incorporation of newly synthesized fatty acids exported form the chloroplast into PC through acyl editing. The protein is Lysophospholipid acyltransferase 2 of Arabidopsis thaliana (Mouse-ear cress).